The primary structure comprises 331 residues: Large ribosomal subunit protein uL3 (331 aa).

This sequence belongs to the universal ribosomal protein uL3 family. In terms of assembly, part of the 50S ribosomal subunit. Forms a cluster with proteins L14 and L24e.

Functionally, one of the primary rRNA binding proteins, it binds directly near the 3'-end of the 23S rRNA, where it nucleates assembly of the 50S subunit. The protein is Large ribosomal subunit protein uL3 of Thermoplasma volcanium (strain ATCC 51530 / DSM 4299 / JCM 9571 / NBRC 15438 / GSS1).